We begin with the raw amino-acid sequence, 337 residues long: Phosphate acyltransferase (337 aa).

This sequence belongs to the PlsX family. Homodimer. Probably interacts with PlsY.

It is found in the cytoplasm. It catalyses the reaction a fatty acyl-[ACP] + phosphate = an acyl phosphate + holo-[ACP]. It functions in the pathway lipid metabolism; phospholipid metabolism. Catalyzes the reversible formation of acyl-phosphate (acyl-PO(4)) from acyl-[acyl-carrier-protein] (acyl-ACP). This enzyme utilizes acyl-ACP as fatty acyl donor, but not acyl-CoA. The protein is Phosphate acyltransferase of Halalkalibacterium halodurans (strain ATCC BAA-125 / DSM 18197 / FERM 7344 / JCM 9153 / C-125) (Bacillus halodurans).